The following is an 811-amino-acid chain: Ribosome biogenesis protein ERB1 (811 aa).

The segment covering M1–P11 has biased composition (polar residues). Positions M1–P138 are disordered. Residues E27–S96 show a composition bias toward acidic residues. A compositionally biased stretch (polar residues) spans A104–A121. Positions E128–P138 are enriched in basic and acidic residues. A required for interaction with NOP7 region spans residues R270 to G386. Residues G386–P422 are required for interaction with YTM1. 2 WD repeats span residues G438–K477 and N485–E525. Positions T547–A566 are disordered. 5 WD repeats span residues Q595–P637, K640–K678, P681–K720, Y724–T764, and I780–T811.

It belongs to the WD repeat BOP1/ERB1 family. In terms of assembly, component of the NOP7 complex, composed of ERB1, NOP7 and YTM1. The complex is held together by ERB1, which interacts with NOP7 via its N-terminal domain and with YTM1 via a high-affinity interaction between the seven-bladed beta-propeller domains of the 2 proteins. The NOP7 complex associates with the 66S pre-ribosome.

The protein localises to the nucleus. The protein resides in the nucleolus. It is found in the nucleoplasm. In terms of biological role, component of the NOP7 complex, which is required for maturation of the 25S and 5.8S ribosomal RNAs and formation of the 60S ribosome. The polypeptide is Ribosome biogenesis protein ERB1 (Debaryomyces hansenii (strain ATCC 36239 / CBS 767 / BCRC 21394 / JCM 1990 / NBRC 0083 / IGC 2968) (Yeast)).